A 189-amino-acid chain; its full sequence is dCTP deaminase, dUMP-forming (189 aa).

Residues 101 to 106, Asp119, 127 to 129, Gln148, Tyr162, and Gln174 each bind dCTP; these read KSSLGR and TLE. Residue Glu129 is the Proton donor/acceptor of the active site.

Belongs to the dCTP deaminase family. Homotrimer.

It catalyses the reaction dCTP + 2 H2O = dUMP + NH4(+) + diphosphate. Its pathway is pyrimidine metabolism; dUMP biosynthesis; dUMP from dCTP: step 1/1. In terms of biological role, bifunctional enzyme that catalyzes both the deamination of dCTP to dUTP and the hydrolysis of dUTP to dUMP without releasing the toxic dUTP intermediate. In Rhodococcus opacus (strain B4), this protein is dCTP deaminase, dUMP-forming.